An 89-amino-acid polypeptide reads, in one-letter code: Small ribosomal subunit protein uS17 (89 aa).

The protein belongs to the universal ribosomal protein uS17 family. In terms of assembly, part of the 30S ribosomal subunit.

One of the primary rRNA binding proteins, it binds specifically to the 5'-end of 16S ribosomal RNA. In Syntrophomonas wolfei subsp. wolfei (strain DSM 2245B / Goettingen), this protein is Small ribosomal subunit protein uS17.